Consider the following 441-residue polypeptide: MPAMTPAFRRADLTGFLRTYGAALILLLAAMLAWQPAQAQLRVDISGTGATQYPVAIADFAVDDTHGRALAEVIRADLTRTGQFRLINAADSGLNVDSQVAHDDWRAKGADFLAYGSITRGPDGRYDVRYRLADTVKKGQLDGVAFSGTEQELRRVAHQIADRIYEKITGVRGVFSTRIAYVLKRGSTYELQVADADGQNPQVALRSREPIISPSWSPDGSRLAYVSFESGKPVVYVHTLATSARIPVANFKGNNSAPAWSPDGSQLAVALTRDGLSQIYIVSAGGGSNMRRITRSPGIDTEPNFTPDGRSIIFTSDRSGGPQIYQTGLDGGDARRLTFNGGYNISPRISPDGSTLLYVARRDGAFRIASLNLSSGSETLLTDGRDDQSPSFAPNGMQVLYAAIQNGRSVLAGVSSDRRVRQTLSVLNGEIREPTWGPFTR.

The first 39 residues, 1–39 (MPAMTPAFRRADLTGFLRTYGAALILLLAAMLAWQPAQA), serve as a signal peptide directing secretion.

This sequence belongs to the TolB family. The Tol-Pal system is composed of five core proteins: the inner membrane proteins TolA, TolQ and TolR, the periplasmic protein TolB and the outer membrane protein Pal. They form a network linking the inner and outer membranes and the peptidoglycan layer.

It is found in the periplasm. Part of the Tol-Pal system, which plays a role in outer membrane invagination during cell division and is important for maintaining outer membrane integrity. This chain is Tol-Pal system protein TolB, found in Bordetella parapertussis (strain 12822 / ATCC BAA-587 / NCTC 13253).